A 73-amino-acid chain; its full sequence is DNA-directed RNA polymerase subunit omega (73 aa).

Belongs to the RNA polymerase subunit omega family. As to quaternary structure, the RNAP catalytic core consists of 2 alpha, 1 beta, 1 beta' and 1 omega subunit. When a sigma factor is associated with the core the holoenzyme is formed, which can initiate transcription.

It catalyses the reaction RNA(n) + a ribonucleoside 5'-triphosphate = RNA(n+1) + diphosphate. In terms of biological role, promotes RNA polymerase assembly. Latches the N- and C-terminal regions of the beta' subunit thereby facilitating its interaction with the beta and alpha subunits. The sequence is that of DNA-directed RNA polymerase subunit omega from Clostridium novyi (strain NT).